The following is a 341-amino-acid chain: tRNA N6-adenosine threonylcarbamoyltransferase (341 aa).

Residues histidine 117 and histidine 121 each contribute to the Fe cation site. Substrate is bound by residues 139 to 143 (VVSGG), aspartate 172, glycine 185, aspartate 189, and asparagine 278. Aspartate 307 contributes to the Fe cation binding site.

It belongs to the KAE1 / TsaD family. It depends on Fe(2+) as a cofactor.

The protein localises to the cytoplasm. The catalysed reaction is L-threonylcarbamoyladenylate + adenosine(37) in tRNA = N(6)-L-threonylcarbamoyladenosine(37) in tRNA + AMP + H(+). Functionally, required for the formation of a threonylcarbamoyl group on adenosine at position 37 (t(6)A37) in tRNAs that read codons beginning with adenine. Is involved in the transfer of the threonylcarbamoyl moiety of threonylcarbamoyl-AMP (TC-AMP) to the N6 group of A37, together with TsaE and TsaB. TsaD likely plays a direct catalytic role in this reaction. The sequence is that of tRNA N6-adenosine threonylcarbamoyltransferase from Bacillus licheniformis (strain ATCC 14580 / DSM 13 / JCM 2505 / CCUG 7422 / NBRC 12200 / NCIMB 9375 / NCTC 10341 / NRRL NRS-1264 / Gibson 46).